We begin with the raw amino-acid sequence, 393 residues long: Protein TsgA (393 aa).

The Cytoplasmic portion of the chain corresponds to 1–10 (MTNSNRIKLT). The chain crosses the membrane as a helical span at residues 11-31 (WISFLSYALTGALVIVTGMVM). Residues 32–50 (GNIADYFHLPVSSMSNTFT) are Periplasmic-facing. The chain crosses the membrane as a helical span at residues 51 to 71 (FLNAGILISIFLNAWLMEIIP). Residues 72 to 77 (LKTQLR) are Cytoplasmic-facing. The helical transmembrane segment at 78 to 98 (FGFILMVLAVAGLMFGHSLAL) threads the bilayer. Residues 99–100 (FS) lie on the Periplasmic side of the membrane. A helical membrane pass occupies residues 101 to 121 (AAMFVLGLVSGITMSIGTFLI). Residues 122-133 (TQLYEGRQRGSR) lie on the Cytoplasmic side of the membrane. The chain crosses the membrane as a helical span at residues 134 to 154 (LLFTDSFFSMAGMIFPMVAAF). At 155 to 161 (LLARSIE) the chain is on the periplasmic side. The helical transmembrane segment at 162-182 (WYWVYACIGLVYLAIFILTFG) threads the bilayer. At 183–205 (CEFPALGKHAQHSQAPVVKEKWG) the chain is on the cytoplasmic side. A helical membrane pass occupies residues 206 to 226 (IGVLFLAVAALCYILGQLGFI). Residues 227-244 (SWVPEYAKGLGMSLNDAG) lie on the Periplasmic side of the membrane. The helical transmembrane segment at 245–265 (ALVSDFWMSYMFGMWAFSFIL) threads the bilayer. Topologically, residues 266 to 272 (RFFDLQR) are cytoplasmic. A helical transmembrane segment spans residues 273 to 293 (ILTVLAGMAAVLMYLFITGTQ). The Periplasmic segment spans residues 294–297 (AHMP). A helical transmembrane segment spans residues 298-318 (WFILTLGFFSSAIYTSIITLG). At 319 to 331 (SQQTKVASPKLVN) the chain is on the cytoplasmic side. The helical transmembrane segment at 332-352 (FILTCGTIGTMLTFVVTGPIV) threads the bilayer. The Periplasmic segment spans residues 353-360 (AHSGPQAA). Residues 361-381 (LLTANGLYAVVFVMCFALGFV) traverse the membrane as a helical segment. Residues 382–393 (SRHRQHSAPATH) lie on the Cytoplasmic side of the membrane.

Belongs to the major facilitator superfamily. TsgA family.

Its subcellular location is the cell inner membrane. The protein is Protein TsgA of Salmonella choleraesuis (strain SC-B67).